Consider the following 182-residue polypeptide: Transcription termination/antitermination protein NusG (182 aa).

Belongs to the NusG family.

Participates in transcription elongation, termination and antitermination. This is Transcription termination/antitermination protein NusG from Chlamydia pneumoniae (Chlamydophila pneumoniae).